The following is a 252-amino-acid chain: Geranylgeranylglyceryl phosphate synthase (252 aa).

Mg(2+) is bound by residues Asp26 and Ser55. Sn-glycerol 1-phosphate-binding positions include 174 to 180 (YLEAGSG), 205 to 206 (GG), and 227 to 228 (GT).

It belongs to the GGGP/HepGP synthase family. Group II subfamily. As to quaternary structure, homotetramer. Homohexamer. Mg(2+) is required as a cofactor.

The protein resides in the cytoplasm. It catalyses the reaction sn-glycerol 1-phosphate + (2E,6E,10E)-geranylgeranyl diphosphate = sn-3-O-(geranylgeranyl)glycerol 1-phosphate + diphosphate. It participates in membrane lipid metabolism; glycerophospholipid metabolism. Its function is as follows. Prenyltransferase that catalyzes the transfer of the geranylgeranyl moiety of geranylgeranyl diphosphate (GGPP) to the C3 hydroxyl of sn-glycerol-1-phosphate (G1P). This reaction is the first ether-bond-formation step in the biosynthesis of archaeal membrane lipids. The polypeptide is Geranylgeranylglyceryl phosphate synthase (Thermococcus kodakarensis (strain ATCC BAA-918 / JCM 12380 / KOD1) (Pyrococcus kodakaraensis (strain KOD1))).